A 421-amino-acid polypeptide reads, in one-letter code: Odorant receptor 67b (421 aa).

The Cytoplasmic segment spans residues 1–48; that stretch reads MQDQLDHELERIDKLPKLGLLWVEYSAYALGVNIAPRKRSSKYCRLTR. The helical transmembrane segment at 49–69 threads the bilayer; it reads ILVLIVNLSIIYSLVAFIMEN. The Extracellular segment spans residues 70–71; that stretch reads YM. Residues 72–92 traverse the membrane as a helical segment; the sequence is ISFETYVEAVLLTFQLSVGVV. Residues 93-151 lie on the Cytoplasmic side of the membrane; that stretch reads KMFHFQNKVESCSQLVFSTETGEVLKSLGLFQLDLPRKKELLSSVSLILLNNWMIIDRQ. The helical transmembrane segment at 152–172 threads the bilayer; the sequence is VMFFFKIVCMPVLYYCVRPYF. Residues 173–217 are Extracellular-facing; it reads QYIFDCYIKDKDTCEMTLTYPAIVPYLQLGNYEFPSYVIRFFLLQ. A helical transmembrane segment spans residues 218–238; the sequence is SGPLWCFFAVFGFNSLFVVLT. Residues 239–289 are Cytoplasmic-facing; sequence RYESGLIKVLRFLVQNSTSDILVPKDQRVKYLQCCVRLFARISSHHNQIEN. Residues 290 to 310 traverse the membrane as a helical segment; the sequence is LFKYIILVQCSVSSILICMLL. Residues 311 to 315 lie on the Extracellular side of the membrane; it reads YKIST. The chain crosses the membrane as a helical span at residues 316–336; it reads VLEVGWVWMGMIMVYFVTIAL. Residues 337-384 lie on the Cytoplasmic side of the membrane; that stretch reads EITLYNVSAQKVESQSELLFHDWYNCSWYNESREFKFMIKMMLLFSRR. A helical membrane pass occupies residues 385 to 405; that stretch reads TFVLSVGGFTSLSHKFLVQVF. The Extracellular portion of the chain corresponds to 406-421; that stretch reads RLSANFFLLLRNMNNK.

This sequence belongs to the insect chemoreceptor superfamily. Heteromeric odorant receptor channel (TC 1.A.69) family. Or63a subfamily. Interacts with Orco. Complexes exist early in the endomembrane system in olfactory sensory neurons (OSNs), coupling these complexes to the conserved ciliary trafficking pathway.

It is found in the cell membrane. In terms of biological role, odorant receptor which mediates acceptance or avoidance behavior, depending on its substrates. The odorant receptor repertoire encodes a large collection of odor stimuli that vary widely in identity, intensity, and duration. May form a complex with Orco to form odorant-sensing units, providing sensitive and prolonged odorant signaling and calcium permeability. Involved in the behavioral responses to ethyl acetate, pentyl acetate, methyl caproate, anisole, heptanal, 2-heptanone, r-carvone, nonanoic acid, and pyrazines. This Drosophila melanogaster (Fruit fly) protein is Odorant receptor 67b (Or67b).